The sequence spans 54 residues: Glutathione S-transferase 6.7 (54 aa).

Belongs to the GST superfamily. Theta family. As to quaternary structure, homodimer. Post-translationally, the N-terminus is blocked.

It is found in the cytoplasm. The catalysed reaction is RX + glutathione = an S-substituted glutathione + a halide anion + H(+). Conjugation of reduced glutathione to a wide number of exogenous and endogenous hydrophobic electrophiles. The protein is Glutathione S-transferase 6.7 of Dicentrarchus labrax (European seabass).